The chain runs to 247 residues: MAVRAQFENSNEVGVFSRLTNSYALVAIGASENFYSVFEAELQDVIPICHATIAGTRIIGRLTAGNRKGLLVPTTTTDQELQHLRNTLPDDVKIQRIEERLSALGNVICCNDHVALIHPDLERETEEIIADVLGVEVFRQTIADNVLTGSYMALSNQGGIVHPKTSIRDQDELSSLLQVPLVAGSVNRGSPVVGAGLVVNDWLAVTGLDTTATELSVIESVFRLGENGPGGIGQGVANKDSIVESFY.

Phosphoserine; by CK1 occurs at positions 174 and 175.

The protein belongs to the eIF-6 family. Monomer. Associates with the 60S ribosomal subunit. Post-translationally, phosphorylation at Ser-174 and Ser-175 promotes nuclear export.

The protein localises to the cytoplasm. The protein resides in the nucleus. Its subcellular location is the nucleolus. Its function is as follows. Binds to the 60S ribosomal subunit and prevents its association with the 40S ribosomal subunit to form the 80S initiation complex in the cytoplasm. Is also involved in ribosome biogenesis. Associates with pre-60S subunits in the nucleus and is involved in its nuclear export. This is Eukaryotic translation initiation factor 6 (tif6) from Emericella nidulans (strain FGSC A4 / ATCC 38163 / CBS 112.46 / NRRL 194 / M139) (Aspergillus nidulans).